A 155-amino-acid chain; its full sequence is Ribosomal RNA large subunit methyltransferase H (155 aa).

Residues Leu-73, Gly-104, and 123-128 (LSALTL) each bind S-adenosyl-L-methionine.

Belongs to the RNA methyltransferase RlmH family. In terms of assembly, homodimer.

Its subcellular location is the cytoplasm. The enzyme catalyses pseudouridine(1915) in 23S rRNA + S-adenosyl-L-methionine = N(3)-methylpseudouridine(1915) in 23S rRNA + S-adenosyl-L-homocysteine + H(+). In terms of biological role, specifically methylates the pseudouridine at position 1915 (m3Psi1915) in 23S rRNA. The polypeptide is Ribosomal RNA large subunit methyltransferase H (Saccharophagus degradans (strain 2-40 / ATCC 43961 / DSM 17024)).